The chain runs to 342 residues: MREPRFWYPAQRNSVPLAARLLAPLGYVYGLAGRIRRGRAEPQRAAVPVICVGNLTAGGAGKTPVALTLAEGLIAKGEKVHFLTRGYGGREQGPIRVDPLRHAAADVGDEPLLLAAAAPTWVAANRSEGAAAAVRGGAGLIIMDDGFQNPGLAKDFSILVVDAASGVGNGRLVPAGPLRERVDDALSRANALILTGRGHAGDGIAARARARGIPVFNSIVRPAVAPDFGAGPFLAFAGIGRPEKFYRTLRELGAELAETISFPDHHMFSESEALKLLVRARELGARLITTEKDAARLSHAPVSSARWRLDEAALRLPVRALIGDFPSLMAQIDDAVSRARRR.

56–63 (TAGGAGKT) lines the ATP pocket.

The protein belongs to the LpxK family.

The catalysed reaction is a lipid A disaccharide + ATP = a lipid IVA + ADP + H(+). It functions in the pathway glycolipid biosynthesis; lipid IV(A) biosynthesis; lipid IV(A) from (3R)-3-hydroxytetradecanoyl-[acyl-carrier-protein] and UDP-N-acetyl-alpha-D-glucosamine: step 6/6. In terms of biological role, transfers the gamma-phosphate of ATP to the 4'-position of a tetraacyldisaccharide 1-phosphate intermediate (termed DS-1-P) to form tetraacyldisaccharide 1,4'-bis-phosphate (lipid IVA). The chain is Tetraacyldisaccharide 4'-kinase from Parvibaculum lavamentivorans (strain DS-1 / DSM 13023 / NCIMB 13966).